The primary structure comprises 968 residues: RNA polymerase-associated protein RapA (968 aa).

A Helicase ATP-binding domain is found at 164–334; that stretch reads DVGRRHAPRV…FARLRLLDPN (171 aa). ATP is bound at residue 177-184; sequence DEVGLGKT. A DEAH box motif is present at residues 280 to 283; the sequence is DEAH. In terms of domain architecture, Helicase C-terminal spans 490–662; the sequence is RVEWLMGYLT…YLASPDQTEG (173 aa).

This sequence belongs to the SNF2/RAD54 helicase family. RapA subfamily. In terms of assembly, interacts with the RNAP. Has a higher affinity for the core RNAP than for the holoenzyme. Its ATPase activity is stimulated by binding to RNAP.

Functionally, transcription regulator that activates transcription by stimulating RNA polymerase (RNAP) recycling in case of stress conditions such as supercoiled DNA or high salt concentrations. Probably acts by releasing the RNAP, when it is trapped or immobilized on tightly supercoiled DNA. Does not activate transcription on linear DNA. Probably not involved in DNA repair. The chain is RNA polymerase-associated protein RapA from Escherichia coli O9:H4 (strain HS).